The chain runs to 632 residues: MAU2 chromatid cohesion factor homolog (632 aa).

2 TPR repeats span residues 453 to 486 and 493 to 526; these read GGFYYVQGLHAFHKNSFHEAKRFLRETLKMANAE and SCSLVLLSHVFLSIGNSKESMNMVTPAMQLASKI.

Belongs to the SCC4/mau-2 family. Interacts with Nipped-B to form the cohesin loading complex.

It is found in the nucleus. The protein localises to the nucleoplasm. Functionally, required for association of the cohesin complex with chromatin during interphase. Plays a role in sister chromatid cohesion and normal progression through prometaphase. The protein is MAU2 chromatid cohesion factor homolog of Drosophila yakuba (Fruit fly).